We begin with the raw amino-acid sequence, 184 residues long: Probable chemoreceptor glutamine deamidase CheD (184 aa).

Belongs to the CheD family.

The enzyme catalyses L-glutaminyl-[protein] + H2O = L-glutamyl-[protein] + NH4(+). Its function is as follows. Probably deamidates glutamine residues to glutamate on methyl-accepting chemotaxis receptors (MCPs), playing an important role in chemotaxis. The protein is Probable chemoreceptor glutamine deamidase CheD of Rhizobium johnstonii (strain DSM 114642 / LMG 32736 / 3841) (Rhizobium leguminosarum bv. viciae).